Consider the following 232-residue polypeptide: 2-C-methyl-D-erythritol 4-phosphate cytidylyltransferase (232 aa).

Belongs to the IspD/TarI cytidylyltransferase family. IspD subfamily.

It carries out the reaction 2-C-methyl-D-erythritol 4-phosphate + CTP + H(+) = 4-CDP-2-C-methyl-D-erythritol + diphosphate. Its pathway is isoprenoid biosynthesis; isopentenyl diphosphate biosynthesis via DXP pathway; isopentenyl diphosphate from 1-deoxy-D-xylulose 5-phosphate: step 2/6. Functionally, catalyzes the formation of 4-diphosphocytidyl-2-C-methyl-D-erythritol from CTP and 2-C-methyl-D-erythritol 4-phosphate (MEP). In Synechococcus elongatus (strain ATCC 33912 / PCC 7942 / FACHB-805) (Anacystis nidulans R2), this protein is 2-C-methyl-D-erythritol 4-phosphate cytidylyltransferase.